Here is a 295-residue protein sequence, read N- to C-terminus: MEIRRRPPNPTVRVENLEYAVPHREAQAKNILEEIVWHKDIEIKNFKKIVSLEDLIKKIENLPAPKDFYKNILESKIKPGVIAEIKKASPSKGVIRKDFNPKDIAICYEGLGASCISVLTDKRFFQGSYEILETVRKSTNLPLLCKDFIISAYQIYKARVSGADAILLIAAILSDDDLIYLKKIADNLKMSVLVEVHNDNELERILKLKSFNLIGINNRDLKTFKTDLKTSIELMNVYADIFSKQNILPISESGINCAKDLESLRSIGIKGVLIGETFMRESDIEESFNKLFYSI.

It belongs to the TrpC family.

The enzyme catalyses 1-(2-carboxyphenylamino)-1-deoxy-D-ribulose 5-phosphate + H(+) = (1S,2R)-1-C-(indol-3-yl)glycerol 3-phosphate + CO2 + H2O. Its pathway is amino-acid biosynthesis; L-tryptophan biosynthesis; L-tryptophan from chorismate: step 4/5. This chain is Indole-3-glycerol phosphate synthase, found in Prochlorococcus marinus (strain MIT 9215).